A 491-amino-acid polypeptide reads, in one-letter code: Eupatolide synthase (491 aa).

Residues leucine 7–tryptophan 27 traverse the membrane as a helical; Signal-anchor for type II membrane protein segment. Position 430 (cysteine 430) interacts with heme.

The protein belongs to the cytochrome P450 family. Requires heme as cofactor. In terms of tissue distribution, expressed in leaf primordia.

The protein resides in the membrane. The catalysed reaction is 8beta-hydroxygermacra-1(10),4,11(13)-trien-12-oate + reduced [NADPH--hemoprotein reductase] + O2 = eupatolide + oxidized [NADPH--hemoprotein reductase] + 2 H2O. It participates in secondary metabolite biosynthesis; terpenoid biosynthesis. In terms of biological role, involved in the biosynthesis of germacrene-derived sesquiterpene lactones. Hydroxylates 8-beta-hydroxy-germacrene A acid to 6-alpha,8-beta-hydroxy-germacrene A acid, which, in turn, undergo spontaneous lactonization to become eupatolide. In Helianthus annuus (Common sunflower), this protein is Eupatolide synthase.